The chain runs to 248 residues: Putative mutator protein MutT4 (248 aa).

The disordered stretch occupies residues 1-64 (MSDGEQAKSR…GSTRMRTVHE (64 aa)). Over residues 9-20 (SRRRRGRRRGRR) the composition is skewed to basic residues. Low complexity predominate over residues 31-44 (AQPAGDATPTPATA). Residues 45 to 57 (KRSRSRSPRRGST) are compositionally biased toward basic residues. Positions 62–198 (VHETSAGGLV…DERRLAEVAD (137 aa)) constitute a Nudix hydrolase domain. Mg(2+) is bound by residues Gly103, Glu118, Glu121, and Glu122. Positions 103–124 (GHIELGETAEQTAIREVAEETG) match the Nudix box motif. The tract at residues 204–248 (LQSDGPAALPPLPPSSPRRRPQTHSRARHADDSAPGQHNGPGPGP) is disordered. Residues 220 to 230 (PRRRPQTHSRA) show a composition bias toward basic residues.

It belongs to the Nudix hydrolase family. The cofactor is Mg(2+). Mn(2+) is required as a cofactor.

May be involved in the GO system responsible for removing an oxidatively damaged form of guanine (7,8-dihydro-8-oxoguanine, 8-oxo-dGTP) from DNA and the nucleotide pool. The polypeptide is Putative mutator protein MutT4 (mutT4) (Mycobacterium tuberculosis (strain CDC 1551 / Oshkosh)).